We begin with the raw amino-acid sequence, 230 residues long: Cytidylate kinase (230 aa).

Residue 16-24 coordinates ATP; sequence GPASAGKST.

It belongs to the cytidylate kinase family. Type 1 subfamily.

The protein resides in the cytoplasm. The catalysed reaction is CMP + ATP = CDP + ADP. It catalyses the reaction dCMP + ATP = dCDP + ADP. The sequence is that of Cytidylate kinase from Lactobacillus johnsonii (strain CNCM I-12250 / La1 / NCC 533).